Here is a 290-residue protein sequence, read N- to C-terminus: ATP synthase gamma chain (290 aa).

This sequence belongs to the ATPase gamma chain family. F-type ATPases have 2 components, CF(1) - the catalytic core - and CF(0) - the membrane proton channel. CF(1) has five subunits: alpha(3), beta(3), gamma(1), delta(1), epsilon(1). CF(0) has three main subunits: a, b and c.

It localises to the cell inner membrane. Its function is as follows. Produces ATP from ADP in the presence of a proton gradient across the membrane. The gamma chain is believed to be important in regulating ATPase activity and the flow of protons through the CF(0) complex. The polypeptide is ATP synthase gamma chain (Anaeromyxobacter sp. (strain K)).